A 102-amino-acid polypeptide reads, in one-letter code: Protein translation factor SUI1 homolog (102 aa).

Belongs to the SUI1 family.

The polypeptide is Protein translation factor SUI1 homolog (Cenarchaeum symbiosum (strain A)).